The chain runs to 101 residues: Replication restart protein PriB (101 aa).

The region spanning 1–101 (MATNHLVLSG…LHAENVELKT (101 aa)) is the SSB domain.

Belongs to the PriB family. Homodimer. Interacts with PriA and DnaT. Component of the replication restart primosome. Primosome assembly occurs via a 'hand-off' mechanism. PriA binds to replication forks, subsequently PriB then DnaT bind; DnaT then displaces ssDNA to generate the helicase loading substrate.

Functionally, involved in the restart of stalled replication forks, which reloads the replicative helicase on sites other than the origin of replication; the PriA-PriB pathway is the major replication restart pathway. During primosome assembly it facilitates complex formation between PriA and DnaT on DNA; stabilizes PriA on DNA. Stimulates the DNA unwinding activity of PriA helicase. The protein is Replication restart protein PriB of Shewanella sediminis (strain HAW-EB3).